Reading from the N-terminus, the 273-residue chain is Hydroxyethylthiazole kinase (273 aa).

Met49 serves as a coordination point for substrate. Arg125 and Thr171 together coordinate ATP. Gly198 provides a ligand contact to substrate.

This sequence belongs to the Thz kinase family. It depends on Mg(2+) as a cofactor.

It catalyses the reaction 5-(2-hydroxyethyl)-4-methylthiazole + ATP = 4-methyl-5-(2-phosphooxyethyl)-thiazole + ADP + H(+). It functions in the pathway cofactor biosynthesis; thiamine diphosphate biosynthesis; 4-methyl-5-(2-phosphoethyl)-thiazole from 5-(2-hydroxyethyl)-4-methylthiazole: step 1/1. Catalyzes the phosphorylation of the hydroxyl group of 4-methyl-5-beta-hydroxyethylthiazole (THZ). This chain is Hydroxyethylthiazole kinase, found in Desulforudis audaxviator (strain MP104C).